Here is a 72-residue protein sequence, read N- to C-terminus: Delta-actitoxin-Avd2b 3 (72 aa).

The N-terminal stretch at 1-21 (MMSRLLVFLMLGAAFMLVVSA) is a signal peptide. A propeptide spanning residues 22–42 (NDAYGDEPAFKDLNQGDESLG) is cleaved from the precursor. Cystine bridges form between C47–C62, C48–C56, and C50–C67.

This sequence belongs to the sea anemone short toxin (type III) family.

Its subcellular location is the secreted. The protein resides in the nematocyst. In terms of biological role, voltage-gated sodium channel (Nav) inhibitor. 1 uM completely inhibits insect voltage-gated sodium channel inactivation (DmNav1 from D.melanogaster). In Anemonia viridis (Snakelocks anemone), this protein is Delta-actitoxin-Avd2b 3.